Consider the following 358-residue polypeptide: Glutamine synthetase (358 aa).

The region spanning 26–105 is the GS beta-grasp domain; the sequence is ILAEYIWIDG…VLAECWNADG (80 aa). Residues 112-358 enclose the GS catalytic domain; the sequence is HRHECAKIME…IMMETICGGI (247 aa).

Belongs to the glutamine synthetase family. Homooctamer.

It is found in the cytoplasm. It carries out the reaction L-glutamate + NH4(+) + ATP = L-glutamine + ADP + phosphate + H(+). The protein is Glutamine synthetase (GLN1) of Tuber borchii (White truffle).